A 646-amino-acid chain; its full sequence is Depudecin biosynthesis cluster-specific transcription activator DEP6 (646 aa).

Residues 16–43 (CEICRERKVRCDRALPKCRRCDRLNQPC) constitute a DNA-binding region (zn(2)-C6 fungal-type). 2 disordered regions span residues 76-130 (TTAA…SQSQ) and 345-366 (KSEH…LALP). The span at 349-360 (SQGMQNRETQSG) shows a compositional bias: polar residues.

The protein resides in the nucleus. Its function is as follows. Transcription factor that positively regulates the expression of the gene cluster that mediates the biosynthesis of depudecin, a highly oxidized eleven-carbon linear polyketide that acts as a histone deacetylase (HDAC) inhibitor and makes a small contribution to pathogenesis. The protein is Depudecin biosynthesis cluster-specific transcription activator DEP6 of Alternaria brassicicola (Dark leaf spot agent).